Here is a 224-residue protein sequence, read N- to C-terminus: Probable GTP-binding protein EngB (224 aa).

An EngB-type G domain is found at 31–204 (VGVEIAFAGR…LGILDQWCKP (174 aa)). GTP-binding positions include 39-46 (GRSNAGKS), 65-69 (GRTQL), 83-86 (DLPG), 150-153 (TKAD), and 183-185 (FSS). Residues Ser-46 and Thr-67 each coordinate Mg(2+).

Belongs to the TRAFAC class TrmE-Era-EngA-EngB-Septin-like GTPase superfamily. EngB GTPase family. It depends on Mg(2+) as a cofactor.

In terms of biological role, necessary for normal cell division and for the maintenance of normal septation. The protein is Probable GTP-binding protein EngB of Shewanella piezotolerans (strain WP3 / JCM 13877).